Consider the following 175-residue polypeptide: Bifunctional protein PyrR (175 aa).

Substrate contacts are provided by residues threonine 40–arginine 41, aspartate 102–threonine 110, arginine 135, and valine 159. A PRPP-binding motif is present at residues valine 98–threonine 110.

Belongs to the purine/pyrimidine phosphoribosyltransferase family. PyrR subfamily. Homodimer and homohexamer; in equilibrium.

It catalyses the reaction UMP + diphosphate = 5-phospho-alpha-D-ribose 1-diphosphate + uracil. Functionally, regulates transcriptional attenuation of the pyrimidine nucleotide (pyr) operon by binding in a uridine-dependent manner to specific sites on pyr mRNA. This disrupts an antiterminator hairpin in the RNA and favors formation of a downstream transcription terminator, leading to a reduced expression of downstream genes. In terms of biological role, also displays a weak uracil phosphoribosyltransferase activity which is not physiologically significant. The protein is Bifunctional protein PyrR of Staphylococcus haemolyticus (strain JCSC1435).